Here is a 204-residue protein sequence, read N- to C-terminus: DNA-binding transcriptional activator EvgA (204 aa).

A Response regulatory domain is found at 2–117 (NAIIIDDHPL…NIIAAIEAAK (116 aa)). 4-aspartylphosphate is present on Asp52. The HTH luxR-type domain occupies 137–202 (DQQKLDSLSK…DLYTFAQRNK (66 aa)). The segment at residues 161–180 (NNDIAEKMFISNKTVSTYKS) is a DNA-binding region (H-T-H motif).

In terms of assembly, homodimer. Phosphorylated by EvgS.

It is found in the cytoplasm. Its function is as follows. Member of the two-component regulatory system EvgS/EvgA. Regulates the expression of emrKY operon and yfdX. Also seems to control expression of at least one other multidrug efflux operon. This Escherichia coli O157:H7 protein is DNA-binding transcriptional activator EvgA (evgA).